A 331-amino-acid chain; its full sequence is MHNASYWGPERANTSCPAPAPTLGCPNASGPAPPLPPPLAVAVPVVYAVICAVGLAGNSAVLFVLLRAPRRKTVTNLFILNLAVADELFTLVPPVNIADFLLRRWPFGELLCKLVVAVDQYNTFSSLYFLTVMSADRYLVVLATAESRRVAGRTYGAARAVSLAVWGVATLVVLPFAVFARLDEEQGRRQCVLVFPQPEALWWRASRLYTLVLGFAIPVSTICVLYTSLLCRLRAIRLDSHAKALDRAKKRVTVLVVAILAVCLLVWTPYHLSTVVALTTDLPQTPLVIAVSYFITSLSYANSCLNPFLYAFLDDSFRRSLRQLLACRTTS.

The Extracellular portion of the chain corresponds to 1–43 (MHNASYWGPERANTSCPAPAPTLGCPNASGPAPPLPPPLAVAV). N-linked (GlcNAc...) asparagine glycosylation is found at N3, N13, and N27. The chain crosses the membrane as a helical span at residues 44–66 (PVVYAVICAVGLAGNSAVLFVLL). Residues 67-75 (RAPRRKTVT) are Cytoplasmic-facing. The helical transmembrane segment at 76–100 (NLFILNLAVADELFTLVPPVNIADF) threads the bilayer. The Extracellular portion of the chain corresponds to 101–115 (LLRRWPFGELLCKLV). A disulfide bridge links C112 with C191. Residues 116 to 135 (VAVDQYNTFSSLYFLTVMSA) traverse the membrane as a helical segment. Over 136-160 (DRYLVVLATAESRRVAGRTYGAARA) the chain is Cytoplasmic. A helical transmembrane segment spans residues 161 to 180 (VSLAVWGVATLVVLPFAVFA). The Extracellular segment spans residues 181–205 (RLDEEQGRRQCVLVFPQPEALWWRA). A helical membrane pass occupies residues 206 to 227 (SRLYTLVLGFAIPVSTICVLYT). Topologically, residues 228–251 (SLLCRLRAIRLDSHAKALDRAKKR) are cytoplasmic. Residues 252–276 (VTVLVVAILAVCLLVWTPYHLSTVV) form a helical membrane-spanning segment. Residues 277–286 (ALTTDLPQTP) lie on the Extracellular side of the membrane. A helical membrane pass occupies residues 287 to 301 (LVIAVSYFITSLSYA). Residues 302-331 (NSCLNPFLYAFLDDSFRRSLRQLLACRTTS) lie on the Cytoplasmic side of the membrane.

It belongs to the G-protein coupled receptor 1 family.

The protein resides in the cell membrane. Its function is as follows. Interacts specifically with a number of opioid ligands. Receptor for neuropeptides B and W, which may be involved in neuroendocrine system regulation, food intake and the organization of other signals. The protein is Neuropeptides B/W receptor type 1 (NPBWR1) of Bos taurus (Bovine).